The chain runs to 417 residues: Serine hydroxymethyltransferase (417 aa).

Residues Leu-121 and 125–127 each bind (6S)-5,6,7,8-tetrahydrofolate; that span reads GHL. Lys-229 is modified (N6-(pyridoxal phosphate)lysine). 355–357 contacts (6S)-5,6,7,8-tetrahydrofolate; it reads SPF.

Belongs to the SHMT family. As to quaternary structure, homodimer. It depends on pyridoxal 5'-phosphate as a cofactor.

The protein resides in the cytoplasm. The enzyme catalyses (6R)-5,10-methylene-5,6,7,8-tetrahydrofolate + glycine + H2O = (6S)-5,6,7,8-tetrahydrofolate + L-serine. It participates in one-carbon metabolism; tetrahydrofolate interconversion. Its pathway is amino-acid biosynthesis; glycine biosynthesis; glycine from L-serine: step 1/1. Its function is as follows. Catalyzes the reversible interconversion of serine and glycine with tetrahydrofolate (THF) serving as the one-carbon carrier. This reaction serves as the major source of one-carbon groups required for the biosynthesis of purines, thymidylate, methionine, and other important biomolecules. Also exhibits THF-independent aldolase activity toward beta-hydroxyamino acids, producing glycine and aldehydes, via a retro-aldol mechanism. The polypeptide is Serine hydroxymethyltransferase (Photorhabdus laumondii subsp. laumondii (strain DSM 15139 / CIP 105565 / TT01) (Photorhabdus luminescens subsp. laumondii)).